Reading from the N-terminus, the 492-residue chain is Catalase isozyme A (492 aa).

Residues 1–23 are disordered; it reads MDPCKFRPSSSFDTKTTTTNAGA. The segment covering 8-21 has biased composition (polar residues); the sequence is PSSSFDTKTTTTNA. Residues His65 and Asn138 contribute to the active site. Tyr348 lines the heme pocket.

The protein belongs to the catalase family. Homotetramer. The cofactor is heme.

Its subcellular location is the peroxisome. The protein localises to the glyoxysome. It carries out the reaction 2 H2O2 = O2 + 2 H2O. Its function is as follows. Occurs in almost all aerobically respiring organisms and serves to protect cells from the toxic effects of hydrogen peroxide. The protein is Catalase isozyme A of Oryza sativa subsp. indica (Rice).